A 256-amino-acid polypeptide reads, in one-letter code: Triosephosphate isomerase (256 aa).

Position 9 to 11 (9 to 11) interacts with substrate; sequence NWK. Histidine 97 functions as the Electrophile in the catalytic mechanism. Glutamate 169 serves as the catalytic Proton acceptor. Substrate-binding positions include glycine 175, serine 214, and 235-236; that span reads GG.

Belongs to the triosephosphate isomerase family. Homodimer.

Its subcellular location is the cytoplasm. It catalyses the reaction D-glyceraldehyde 3-phosphate = dihydroxyacetone phosphate. It participates in carbohydrate biosynthesis; gluconeogenesis. The protein operates within carbohydrate degradation; glycolysis; D-glyceraldehyde 3-phosphate from glycerone phosphate: step 1/1. Involved in the gluconeogenesis. Catalyzes stereospecifically the conversion of dihydroxyacetone phosphate (DHAP) to D-glyceraldehyde-3-phosphate (G3P). This is Triosephosphate isomerase from Vibrio vulnificus (strain CMCP6).